Reading from the N-terminus, the 360-residue chain is Photosystem II protein D1 (360 aa).

The next 3 helical transmembrane spans lie at 29-46 (YIGW…TATS), 118-133 (HFLT…EWEL), and 142-156 (WISV…AAAA). Residue His118 participates in chlorophyll a binding. Tyr126 lines the pheophytin a pocket. The [CaMn4O5] cluster site is built by Asp170 and Glu189. A helical membrane pass occupies residues 197 to 218 (FHQLGVAGVFGGSLFSAMHGSL). A chlorophyll a-binding site is contributed by His198. A quinone-binding positions include His215 and 264-265 (SF). Fe cation is bound at residue His215. Residue His272 participates in Fe cation binding. Residues 274–288 (FLGLWPVVGIWLTAL) form a helical membrane-spanning segment. The [CaMn4O5] cluster site is built by His332, Glu333, Asp342, and Ala344. The propeptide occupies 345 to 360 (SGESLPVALTAPAVNG).

This sequence belongs to the reaction center PufL/M/PsbA/D family. PSII is composed of 1 copy each of membrane proteins PsbA, PsbB, PsbC, PsbD, PsbE, PsbF, PsbH, PsbI, PsbJ, PsbK, PsbL, PsbM, PsbT, PsbX, PsbY, PsbZ, Psb30/Ycf12, at least 3 peripheral proteins of the oxygen-evolving complex and a large number of cofactors. It forms dimeric complexes. Requires The D1/D2 heterodimer binds P680, chlorophylls that are the primary electron donor of PSII, and subsequent electron acceptors. It shares a non-heme iron and each subunit binds pheophytin, quinone, additional chlorophylls, carotenoids and lipids. D1 provides most of the ligands for the Mn4-Ca-O5 cluster of the oxygen-evolving complex (OEC). There is also a Cl(-1) ion associated with D1 and D2, which is required for oxygen evolution. The PSII complex binds additional chlorophylls, carotenoids and specific lipids. as cofactor. Tyr-161 forms a radical intermediate that is referred to as redox-active TyrZ, YZ or Y-Z. In terms of processing, C-terminally processed by CTPA; processing is essential to allow assembly of the oxygen-evolving complex and thus photosynthetic growth.

It is found in the plastid. It localises to the chloroplast thylakoid membrane. The enzyme catalyses 2 a plastoquinone + 4 hnu + 2 H2O = 2 a plastoquinol + O2. Its function is as follows. Photosystem II (PSII) is a light-driven water:plastoquinone oxidoreductase that uses light energy to abstract electrons from H(2)O, generating O(2) and a proton gradient subsequently used for ATP formation. It consists of a core antenna complex that captures photons, and an electron transfer chain that converts photonic excitation into a charge separation. The D1/D2 (PsbA/PsbD) reaction center heterodimer binds P680, the primary electron donor of PSII as well as several subsequent electron acceptors. The sequence is that of Photosystem II protein D1 from Porphyra purpurea (Red seaweed).